The sequence spans 87 residues: Potassium channel toxin Tdi-beta-KTx (87 aa).

The N-terminal stretch at 1–19 (MERKLALLLLLGMITLASS) is a signal peptide. Residues 20-27 (GLREKHVQ) constitute a propeptide that is removed on maturation. Residues 53 to 87 (QFGCPAYEGYCMNHCQDIERHDGSCHGFKCKCEKS) form the BetaSPN-type CS-alpha/beta domain. 3 cysteine pairs are disulfide-bonded: C56–C77, C63–C82, and C67–C84.

As to expression, expressed by the venom gland.

It is found in the secreted. Its function is as follows. Inhibits voltage-gated potassium channel. The protein is Potassium channel toxin Tdi-beta-KTx of Tityus discrepans (Venezuelan scorpion).